We begin with the raw amino-acid sequence, 209 residues long: Urease accessory protein UreG (209 aa).

14–21 (GPVGSGKT) contributes to the GTP binding site.

Belongs to the SIMIBI class G3E GTPase family. UreG subfamily. As to quaternary structure, homodimer. UreD, UreF and UreG form a complex that acts as a GTP-hydrolysis-dependent molecular chaperone, activating the urease apoprotein by helping to assemble the nickel containing metallocenter of UreC. The UreE protein probably delivers the nickel.

It is found in the cytoplasm. Facilitates the functional incorporation of the urease nickel metallocenter. This process requires GTP hydrolysis, probably effectuated by UreG. This Rhodopseudomonas palustris (strain ATCC BAA-98 / CGA009) protein is Urease accessory protein UreG.